The chain runs to 105 residues: Integration host factor subunit alpha (105 aa).

Belongs to the bacterial histone-like protein family. Heterodimer of an alpha and a beta chain.

Functionally, this protein is one of the two subunits of integration host factor, a specific DNA-binding protein that functions in genetic recombination as well as in transcriptional and translational control. The polypeptide is Integration host factor subunit alpha (Rhodospirillum rubrum (strain ATCC 11170 / ATH 1.1.1 / DSM 467 / LMG 4362 / NCIMB 8255 / S1)).